The primary structure comprises 160 residues: Cytochrome b6-f complex subunit 4 (160 aa).

The next 3 helical transmembrane spans lie at 36–56 (LLYVFPVVILGTIGLVTALAV), 95–115 (LLGIACQAAIPLGLMLVPFIE), and 131–151 (AVFLFGTVVTLWLGAGATFPI).

It belongs to the cytochrome b family. PetD subfamily. As to quaternary structure, the 4 large subunits of the cytochrome b6-f complex are cytochrome b6, subunit IV (17 kDa polypeptide, PetD), cytochrome f and the Rieske protein, while the 4 small subunits are PetG, PetL, PetM and PetN. The complex functions as a dimer.

It localises to the cellular thylakoid membrane. In terms of biological role, component of the cytochrome b6-f complex, which mediates electron transfer between photosystem II (PSII) and photosystem I (PSI), cyclic electron flow around PSI, and state transitions. The sequence is that of Cytochrome b6-f complex subunit 4 from Rippkaea orientalis (strain PCC 8801 / RF-1) (Cyanothece sp. (strain PCC 8801)).